The primary structure comprises 338 residues: Glycerol-3-phosphate dehydrogenase [NAD(P)+] (338 aa).

NADPH-binding residues include serine 14, tyrosine 15, histidine 35, and lysine 109. Residues lysine 109, glycine 138, and threonine 140 each coordinate sn-glycerol 3-phosphate. Position 142 (alanine 142) interacts with NADPH. 5 residues coordinate sn-glycerol 3-phosphate: lysine 194, aspartate 247, serine 257, arginine 258, and asparagine 259. The active-site Proton acceptor is the lysine 194. Arginine 258 provides a ligand contact to NADPH. NADPH is bound by residues valine 282 and glutamate 284.

This sequence belongs to the NAD-dependent glycerol-3-phosphate dehydrogenase family.

It localises to the cytoplasm. It catalyses the reaction sn-glycerol 3-phosphate + NAD(+) = dihydroxyacetone phosphate + NADH + H(+). The catalysed reaction is sn-glycerol 3-phosphate + NADP(+) = dihydroxyacetone phosphate + NADPH + H(+). It participates in membrane lipid metabolism; glycerophospholipid metabolism. Catalyzes the reduction of the glycolytic intermediate dihydroxyacetone phosphate (DHAP) to sn-glycerol 3-phosphate (G3P), the key precursor for phospholipid synthesis. The polypeptide is Glycerol-3-phosphate dehydrogenase [NAD(P)+] (Shewanella frigidimarina (strain NCIMB 400)).